We begin with the raw amino-acid sequence, 373 residues long: MMPANEDKENNIVYTGNESSGINFPQTPAHLLKRSHSNILKPPVRLDQLKRDANSNNGNTLKYIQGGKEVSPTKRLHTHAQQQGRLPLAAKDNNRSKSFIFPETSNQSKDADLPQLQNTLSIRKNDQLRKLSQISRSRSRANHNDLLSNSRKLQKYGSVLGYNALPKMKSLVLKDLADSGKNEESSDDDEGNEDSESKLGKKLQSALLKQDSSDGENELNGGLGLFNEQGGLQQLIKNSTKNEQKTKNDKSDKTDDYDIEIAPQRQEPLPYVPEGYSPFQQDDIEKLKTFNSPYKLDLEDEDDTPDKVDLLPLEQIDEEGEKDETECITRNQEEGAALPLLSKNFKEVAAVPTMELVYSEEGLDPEELEDLVT.

Residues 1–10 (MMPANEDKEN) are compositionally biased toward basic and acidic residues. The interval 1 to 27 (MMPANEDKENNIVYTGNESSGINFPQT) is disordered. The segment covering 12 to 26 (IVYTGNESSGINFPQ) has biased composition (polar residues). The D-box signature appears at 85–88 (RLPL). A disordered region spans residues 177–278 (ADSGKNEESS…LPYVPEGYSP (102 aa)). Phosphoserine occurs at positions 185, 186, 212, and 213. Acidic residues predominate over residues 185–194 (SSDDDEGNED). Positions 225–235 (LFNEQGGLQQL) are enriched in low complexity. The span at 240–256 (TKNEQKTKNDKSDKTDD) shows a compositional bias: basic and acidic residues. S277 is modified (phosphoserine). S292 is modified (phosphoserine; by CDC28).

This sequence belongs to the securin family. In terms of assembly, interacts with the caspase-like ESP1, and prevents its protease activity probably by covering its active site. Interacts with CDC20. Post-translationally, phosphorylated by CDC28. The phosphorylation may be important for ESP1 localization to the nucleus. In terms of processing, ubiquitinated by the anaphase promoting complex (APC) at the onset of anaphase, conducting to its degradation.

It localises to the cytoplasm. The protein resides in the nucleus. Regulatory protein, which plays a central role in chromosome stability. Probably acts by blocking the action of key proteins. During the mitosis, it blocks Separase/ESP1 function, preventing the proteolysis of the cohesin complex and the subsequent segregation of the chromosomes. At the onset of anaphase, it is ubiquitinated, conducting to its destruction and to the liberation of ESP1. The sequence is that of Securin (PDS1) from Saccharomyces cerevisiae (strain ATCC 204508 / S288c) (Baker's yeast).